The primary structure comprises 243 residues: Phosphatidylserine decarboxylase proenzyme (243 aa).

The active-site Schiff-base intermediate with substrate; via pyruvic acid is the Ser-212. Residue Ser-212 is modified to Pyruvic acid (Ser); by autocatalysis.

It belongs to the phosphatidylserine decarboxylase family. PSD-A subfamily. Heterodimer of a large membrane-associated beta subunit and a small pyruvoyl-containing alpha subunit. It depends on pyruvate as a cofactor. In terms of processing, is synthesized initially as an inactive proenzyme. Formation of the active enzyme involves a self-maturation process in which the active site pyruvoyl group is generated from an internal serine residue via an autocatalytic post-translational modification. Two non-identical subunits are generated from the proenzyme in this reaction, and the pyruvate is formed at the N-terminus of the alpha chain, which is derived from the carboxyl end of the proenzyme. The post-translation cleavage follows an unusual pathway, termed non-hydrolytic serinolysis, in which the side chain hydroxyl group of the serine supplies its oxygen atom to form the C-terminus of the beta chain, while the remainder of the serine residue undergoes an oxidative deamination to produce ammonia and the pyruvoyl prosthetic group on the alpha chain.

It localises to the cell membrane. The enzyme catalyses a 1,2-diacyl-sn-glycero-3-phospho-L-serine + H(+) = a 1,2-diacyl-sn-glycero-3-phosphoethanolamine + CO2. Its pathway is phospholipid metabolism; phosphatidylethanolamine biosynthesis; phosphatidylethanolamine from CDP-diacylglycerol: step 2/2. Functionally, catalyzes the formation of phosphatidylethanolamine (PtdEtn) from phosphatidylserine (PtdSer). The protein is Phosphatidylserine decarboxylase proenzyme of Mycobacterium leprae (strain Br4923).